The primary structure comprises 51 residues: MRDKIKLESGAGTGHFYTTTKNKRTMPGKLEIKKFDPVARKHVVYKETKLK.

The interval M1 to K21 is disordered.

Belongs to the bacterial ribosomal protein bL33 family.

The polypeptide is Large ribosomal subunit protein bL33 (Neisseria gonorrhoeae (strain ATCC 700825 / FA 1090)).